A 436-amino-acid polypeptide reads, in one-letter code: Protein TolB homolog (436 aa).

Residues 1–27 form the signal peptide; the sequence is MRHSIRLTAALLLAFIACFSFPLSAMA.

The protein belongs to the TolB family.

It localises to the periplasm. The sequence is that of Protein TolB homolog from Chlorobium luteolum (strain DSM 273 / BCRC 81028 / 2530) (Pelodictyon luteolum).